Consider the following 322-residue polypeptide: MFSRYAFRCAQPLRQSARQYSTEAPKSKSLAPVYVAVGLAGLGVGLYRYQSGAATAEAPAERPKVFTGGDQGWVNLKLSDIEILSHNTKRLRFEFPDKEAVSGLHIASALLTKYSPPDGSKPVIRPYTPTSDEDQPGYLELVVKRYPNGPMSEHLHNMNVDQRLDFKGPLPKYPWEANKHKHICLVAGGTGITPMYQLAREIFKNPEDKTKVTLVFGNVSEEDILLKREFEDLENTYPQRFRAFYVLDNPPEGWTGGKGYITKELLKTVLPEPKEENIKIFVCGPPGMYKAISGPKVSPKDQGELTGILKELGYSKDQVYKF.

The chain crosses the membrane as a helical span at residues L30–L46. Residues Q71–E176 enclose the FAD-binding FR-type domain. K179–L214 contacts FAD.

It belongs to the flavoprotein pyridine nucleotide cytochrome reductase family. Requires FAD as cofactor.

Its subcellular location is the mitochondrion outer membrane. It carries out the reaction 2 Fe(III)-[cytochrome b5] + NADH = 2 Fe(II)-[cytochrome b5] + NAD(+) + H(+). Its function is as follows. May mediate the reduction of outer membrane cytochrome b5. This Emericella nidulans (strain FGSC A4 / ATCC 38163 / CBS 112.46 / NRRL 194 / M139) (Aspergillus nidulans) protein is NADH-cytochrome b5 reductase 2 (mcr1).